The sequence spans 177 residues: Protein TERMINAL FLOWER 1 (177 aa).

The protein belongs to the phosphatidylethanolamine-binding protein family. In terms of tissue distribution, expressed below the apical dome of inflorescence and coflorescence meristems, and in inflorescence stem.

Its subcellular location is the cytoplasm. In terms of biological role, controls inflorescence meristem identity and is required for maintenance of an indeterminate inflorescence. Prevents the expression of 'APETALA1' and 'LEAFY'. Also plays a role in the regulation of the time of flowering in the long-day flowering pathway. May form complexes with phosphorylated ligands by interfering with kinases and their effectors. The chain is Protein TERMINAL FLOWER 1 (TFL1) from Arabidopsis thaliana (Mouse-ear cress).